Here is a 145-residue protein sequence, read N- to C-terminus: MQKALKLGSFFARSAISVKPTLATSKMTQLRHFSHGASVFDIDSVEDFTEKVIQSSVPVIVDFHAEWCGPCQALGPRLEEKVNGRQGSVLLAKINVDHAGELAMDYGISAVPTVFAFKNGEKISGFSGVLDDEQLDDFIEDVLAA.

In terms of domain architecture, Thioredoxin spans 39–144; that stretch reads VFDIDSVEDF…LDDFIEDVLA (106 aa). Residues Cys-68 and Cys-71 each act as nucleophile in the active site. An intrachain disulfide couples Cys-68 to Cys-71.

It belongs to the thioredoxin family.

Participates in various redox reactions through the reversible oxidation of its active center dithiol to a disulfide and catalyzes dithiol-disulfide exchange reactions. In Caenorhabditis elegans, this protein is Probable thioredoxin-2 (trx-2).